The chain runs to 490 residues: Glutamyl-tRNA(Gln) amidotransferase subunit A (490 aa).

Residues K78 and S159 each act as charge relay system in the active site. The active-site Acyl-ester intermediate is the S183.

The protein belongs to the amidase family. GatA subfamily. In terms of assembly, heterotrimer of A, B and C subunits.

The catalysed reaction is L-glutamyl-tRNA(Gln) + L-glutamine + ATP + H2O = L-glutaminyl-tRNA(Gln) + L-glutamate + ADP + phosphate + H(+). Its function is as follows. Allows the formation of correctly charged Gln-tRNA(Gln) through the transamidation of misacylated Glu-tRNA(Gln) in organisms which lack glutaminyl-tRNA synthetase. The reaction takes place in the presence of glutamine and ATP through an activated gamma-phospho-Glu-tRNA(Gln). In Paramagnetospirillum magneticum (strain ATCC 700264 / AMB-1) (Magnetospirillum magneticum), this protein is Glutamyl-tRNA(Gln) amidotransferase subunit A.